The sequence spans 135 residues: Large ribosomal subunit protein uL18 (135 aa).

The tract at residues 1–25 is disordered; the sequence is MAQTENQKSKRIPLGKDVSTQRRLS.

Belongs to the universal ribosomal protein uL18 family. In terms of assembly, part of the 50S ribosomal subunit; part of the 5S rRNA/L5/L18/L25 subcomplex. Contacts the 5S and 23S rRNAs.

This is one of the proteins that bind and probably mediate the attachment of the 5S RNA into the large ribosomal subunit, where it forms part of the central protuberance. This Nocardia farcinica (strain IFM 10152) protein is Large ribosomal subunit protein uL18.